The primary structure comprises 360 residues: AA9 family lytic polysaccharide monooxygenase A (360 aa).

The N-terminal stretch at 1 to 19 (MKTSFGLLALAAAAKLVNA) is a signal peptide. The Cu(2+) site is built by His20 and His102. A disulfide bridge connects residues Cys62 and Cys183. His169 lines the O2 pocket. Position 180 (Tyr180) interacts with Cu(2+). The segment at 254–293 (TSAASASSTKAPATTAAPVQTESAKPATSTTQAAAPTTLV) is disordered. Residues 322–358 (GVVKMYAQCGGMNYSGSTTCESGLTCKQWNPYYHQCV) enclose the CBM1 domain. N-linked (GlcNAc...) asparagine glycosylation occurs at Asn334.

It belongs to the polysaccharide monooxygenase AA9 family. The cofactor is Cu(2+).

Its subcellular location is the secreted. It catalyses the reaction [(1-&gt;4)-beta-D-glucosyl]n+m + reduced acceptor + O2 = 4-dehydro-beta-D-glucosyl-[(1-&gt;4)-beta-D-glucosyl]n-1 + [(1-&gt;4)-beta-D-glucosyl]m + acceptor + H2O.. In terms of biological role, lytic polysaccharide monooxygenase (LPMO) that depolymerizes crystalline and amorphous polysaccharides via the oxidation of scissile alpha- or beta-(1-4)-glycosidic bonds, yielding C4 oxidation products. Catalysis by LPMOs requires the reduction of the active-site copper from Cu(II) to Cu(I) by a reducing agent and H(2)O(2) or O(2) as a cosubstrate. The protein is AA9 family lytic polysaccharide monooxygenase A (eglD) of Aspergillus terreus (strain NIH 2624 / FGSC A1156).